The primary structure comprises 327 residues: Malate dehydrogenase (327 aa).

12–18 (GAAGQIA) provides a ligand contact to NAD(+). Positions 93 and 99 each coordinate substrate. NAD(+) is bound by residues Asn106, Gln113, and 130 to 132 (VGN). Substrate-binding residues include Asn132 and Arg163. The active-site Proton acceptor is His188.

It belongs to the LDH/MDH superfamily. MDH type 2 family.

The catalysed reaction is (S)-malate + NAD(+) = oxaloacetate + NADH + H(+). Its function is as follows. Catalyzes the reversible oxidation of malate to oxaloacetate. The chain is Malate dehydrogenase from Acidiphilium cryptum (strain JF-5).